A 154-amino-acid polypeptide reads, in one-letter code: Endoribonuclease YbeY (154 aa).

3 residues coordinate Zn(2+): histidine 118, histidine 122, and histidine 128.

The protein belongs to the endoribonuclease YbeY family. Requires Zn(2+) as cofactor.

The protein resides in the cytoplasm. Single strand-specific metallo-endoribonuclease involved in late-stage 70S ribosome quality control and in maturation of the 3' terminus of the 16S rRNA. This Chloroflexus aurantiacus (strain ATCC 29366 / DSM 635 / J-10-fl) protein is Endoribonuclease YbeY.